The sequence spans 117 residues: uncharacterized protein (117 aa).

The disordered stretch occupies residues F16–L56. Over residues S31–L56 the composition is skewed to low complexity.

This is an uncharacterized protein from Saccharomyces cerevisiae (strain ATCC 204508 / S288c) (Baker's yeast).